The chain runs to 371 residues: Integrator complex assembly factor WDR73 (371 aa).

WD repeat units lie at residues 81–121 (FSDR…DVIE), 273–313 (SPDP…GKKT), and 333–371 (DSAPLVTTHTWHPRKPRTLLSAASDSSLHVWDWVDLQAS).

Belongs to the WD repeat WDR73 family. Interacts with INTS9 and INTS11; the interaction is direct. Part of the multiprotein complex composed of BRAT1, WDR73, as well as integrator complex subunits INTS9 and INTS11.

It localises to the cytoplasm. Its subcellular location is the cytoskeleton. It is found in the spindle. The protein localises to the spindle pole. The protein resides in the cleavage furrow. In terms of biological role, component of a multiprotein complex required for the assembly of the RNA endonuclease module of the integrator complex. Associates with INTS9 and INTS11 in the cytoplasm, stabilizing the INTS9-INTS11 heterodimer and blocking the active site of INTS11. BRAT1 then joins the complex and plugs the active site of INTS11, leading to WDR73 release and nuclear import of INTS9 and INTS11. This Mus musculus (Mouse) protein is Integrator complex assembly factor WDR73 (Wdr73).